The sequence spans 719 residues: Developmental regulator flbA (719 aa).

Positions 1-17 (MPTSISTAPLSQGSPPS) are enriched in polar residues. Disordered regions lie at residues 1–39 (MPTSISTAPLSQGSPPSSLIDYQPQSVPSSSSPPPSTAA), 117–141 (IGSTTNSSLRQSASSGSLQKHSRKA), and 155–190 (LSPPLSDGSGSSEQSSSAPFEPLSAVTEQPNPAAER). 2 stretches are compositionally biased toward low complexity: residues 123-135 (SSLRQSASSGSLQ) and 158-171 (PLSDGSGSSEQSSS). Residues 214-411 (QTSSRLLRMT…QDGPNVKSSV (198 aa)) are fungal-DR. The 87-residue stretch at 425 to 511 (GLVGVKMARE…SKNAIYAITE (87 aa)) folds into the DEP domain. An RGS domain is found at 540–685 (SNNARLNHIL…FLRDPKYSAI (146 aa)). The tract at residues 694–719 (LIGGGRSYSPTPGNVPERSMSRSQRS) is disordered.

Required for asexual sporulation and normal colony development. May be involved in brlA activation. Could play a regulatory role in controlling the flug-initiated signal transduction pathway that triggers the asexual reproduction. In Emericella nidulans (strain FGSC A4 / ATCC 38163 / CBS 112.46 / NRRL 194 / M139) (Aspergillus nidulans), this protein is Developmental regulator flbA (flbA).